A 2104-amino-acid chain; its full sequence is Transmembrane matrix receptor MUP-4 (2104 aa).

Positions 1-15 (MRWVPLVLLPLIASA) are cleaved as a signal peptide. The Extracellular segment spans residues 16 to 1860 (ATTYQHRQTY…FCETAPSNLP (1845 aa)). EGF-like domains follow at residues 71 to 110 (VVNECARPSLNACHKDAQCVDLAEGYTCRCNSGFADTSPD), 122 to 163 (TTNE…VSTS), and 175 to 213 (SVNECTNGEADCSNNADCFDRADGYECKCRPGFVDASPN). 6 cysteine pairs are disulfide-bonded: Cys-75–Cys-89, Cys-83–Cys-98, Cys-126–Cys-142, Cys-136–Cys-151, Cys-179–Cys-192, and Cys-186–Cys-201. Positions 220–265 (RVCNKPKAPEYYGQQSRQPQCSEGSGCGPNEECRFNTAGEKVCQCR) constitute a WR1 domain. 3 consecutive EGF-like domains span residues 278–315 (VFSQCEQANECDRNAFCSNTYDGPKCQCKDGFLDVSPD), 327–360 (VRNECADGSHDCSHQAACQDTPTGYICSCNSNCI), and 377–416 (AANQCSDKSLNSCDENADCVQLPDGYTCKCFAGYVDVSSN). 7 cysteine pairs are disulfide-bonded: Cys-282-Cys-294, Cys-288-Cys-303, Cys-331-Cys-344, Cys-338-Cys-353, Cys-355-Cys-359, Cys-381-Cys-395, and Cys-389-Cys-404. Positions 437-612 (DLVFLIDGSG…DLNTRLRSAI (176 aa)) constitute a VWFA domain. N-linked (GlcNAc...) asparagine glycans are attached at residues Asn-494 and Asn-556. 2 consecutive EGF-like domains span residues 728-772 (SNDE…NKCE) and 819-857 (LIDECAAGVADCDPNAKCTDTDESYICTCNEGFLDKSPE). 21 cysteine pairs are disulfide-bonded: Cys-732–Cys-746, Cys-740–Cys-756, Cys-758–Cys-771, Cys-823–Cys-836, Cys-830–Cys-845, Cys-873–Cys-886, Cys-880–Cys-895, Cys-923–Cys-937, Cys-931–Cys-946, Cys-972–Cys-985, Cys-979–Cys-995, Cys-1020–Cys-1034, Cys-1028–Cys-1046, Cys-1075–Cys-1089, Cys-1083–Cys-1098, Cys-1125–Cys-1139, Cys-1133–Cys-1148, Cys-1173–Cys-1187, Cys-1181–Cys-1196, Cys-1219–Cys-1233, and Cys-1227–Cys-1242. An EGF-like 9; calcium-binding domain is found at 869-907 (QRNECLDGTHNCSMNADCIDLPDGFLCRCKEDFVDISPN). Asn-879 is a glycosylation site (N-linked (GlcNAc...) asparagine). EGF-like domains lie at 919–958 (LVNECLITGGHNCHEHAICIDTRDSYKCQCKEGYVDHDEL), 968–1007 (LNQICESGKHECDKNARCVEKGANDYECVCNAGFIDKSPL), 1016–1058 (VEPI…VGAV), 1071–1110 (LVNECLSASLNSCDAAATCIDLDDGYTCKCPLGSKDESPV), 1121–1160 (LVNECNIPHLNNCSHFATCIDLEEGYECKCKPEYHDQKPE), 1169–1208 (IINECLAENLNDCSPNAMCIDKIDGYDCKCKAPFQDEMPS), and 1215–1254 (RFDECADPKDNDCDKHALCIDTDDSYTCQCKEGFFDEISD). Asn-1037 is a glycosylation site (N-linked (GlcNAc...) asparagine). Asn-1132 carries an N-linked (GlcNAc...) asparagine glycan. N-linked (GlcNAc...) asparagine glycosylation is found at Asn-1271, Asn-1403, and Asn-1576. 2 SEA domains span residues 1322 to 1444 (PTTS…DDAD) and 1495 to 1620 (AVES…PEQL). 3 EGF-like domains span residues 1622-1658 (PFSNCYHSDCHPDAICKEVGKGYTCTCPDGFRDLNPS), 1669-1705 (GVNECEKPELNECSPHARCIDLDYLYKCECIRPYVNS), and 1717-1754 (SIDYCQDVNYCPLNSTCVNVDEQARCDCKPGFVDLRKS). 11 cysteine pairs are disulfide-bonded: Cys-1626–Cys-1637, Cys-1631–Cys-1646, Cys-1673–Cys-1687, Cys-1681–Cys-1696, Cys-1721–Cys-1733, Cys-1727–Cys-1742, Cys-1776–Cys-1789, Cys-1783–Cys-1798, Cys-1821–Cys-1830, Cys-1824–Cys-1841, and Cys-1843–Cys-1852. N-linked (GlcNAc...) asparagine glycosylation is found at Asn-1730 and Asn-1782. The region spanning 1772-1810 (DIDECALGLHNCSAAAICIDKKIGYECQCQEGYEDGNPS) is the EGF-like 20; calcium-binding domain. An EGF-like 21 domain is found at 1817–1853 (AASLCGLCNGHGDCIHDALSSNVTCACLDGYTGQFCE). Asn-1838 carries an N-linked (GlcNAc...) asparagine glycan. A helical membrane pass occupies residues 1861–1881 (LILMTLLALLFLLLTLLCCLY). Topologically, residues 1882-2104 (MCARCRCFGA…TTKAEEVNYF (223 aa)) are cytoplasmic. Residues 2031 to 2040 (SGAMMSSASG) show a composition bias toward low complexity. The disordered stretch occupies residues 2031-2104 (SGAMMSSASG…TTKAEEVNYF (74 aa)). 2 stretches are compositionally biased toward basic and acidic residues: residues 2062-2076 (VYDRTTRTNQSHDFE) and 2083-2104 (TGTERSKREFVTTTKAEEVNYF).

Abundant at hypodermal cell-matrix junctions overlying muscle of threefold embryos. Expression continues in body wall muscle in larvae and adults and is also detected in other regions where cells show mechanical attachment to the hypodermis including the inner surface of the pharynx, overlying anal and intestinal muscles, overlying vulval and uterine sex muscles, male tail muscle attachment zones and the six mechanosensory neurons (at protein level).

It localises to the cell junction. The protein localises to the hemidesmosome. The protein resides in the cytoplasm. It is found in the cytoskeleton. Its subcellular location is the cell membrane. In terms of biological role, required for junctional attachments between hypodermis and muscle, and between the apical epithelial surface and the cuticular matrix. Essential for enclosure of the embryo by the hypodermis, hypodermal integrity, embryo elongation, and maintenance of hypodermal morphology in fully elongated embryos. In Caenorhabditis elegans, this protein is Transmembrane matrix receptor MUP-4.